An 81-amino-acid chain; its full sequence is Photosystem I iron-sulfur center (81 aa).

4Fe-4S ferredoxin-type domains lie at 2–31 and 37–68; these read AHTV…MVPW and GQIA…IRVY. Positions 11, 14, 17, 21, 48, 51, 54, and 58 each coordinate [4Fe-4S] cluster.

The cyanobacterial PSI reaction center is composed of one copy each of PsaA,B,C,D,E,F,I,J,K,L,M and X, and forms trimeric complexes. [4Fe-4S] cluster serves as cofactor.

The protein resides in the cellular thylakoid membrane. The enzyme catalyses reduced [plastocyanin] + hnu + oxidized [2Fe-2S]-[ferredoxin] = oxidized [plastocyanin] + reduced [2Fe-2S]-[ferredoxin]. In terms of biological role, apoprotein for the two 4Fe-4S centers FA and FB of photosystem I (PSI); essential for photochemical activity. FB is the terminal electron acceptor of PSI, donating electrons to ferredoxin. The C-terminus interacts with PsaA/B/D and helps assemble the protein into the PSI complex. Required for binding of PsaD and PsaE to PSI. PSI is a plastocyanin/cytochrome c6-ferredoxin oxidoreductase, converting photonic excitation into a charge separation, which transfers an electron from the donor P700 chlorophyll pair to the spectroscopically characterized acceptors A0, A1, FX, FA and FB in turn. The sequence is that of Photosystem I iron-sulfur center (psaC) from Synechococcus elongatus.